The primary structure comprises 70 residues: Ubiquinol-cytochrome c reductase complex assembly factor 5 (70 aa).

Residues 1–19 (MFTRAQVRRILQRVPGKQR) are Mitochondrial matrix-facing. The chain crosses the membrane as a helical span at residues 20-41 (FGIYRFLPFFFVLGGTMEWIMI). Residues 42–70 (KVRVGQETFYDVYRRKASERQYQRRLEDE) lie on the Mitochondrial intermembrane side of the membrane.

Belongs to the UQCC5 family. Associates with the mitochondrial ribosome. Interacts with UQCC6. Interacts with MT-CYB; interacts with newly synthesizes MT-CYB. Forms a complex, named COMB/coordinator of mitochondrial CYTB biogenesis, composed of UQCC1, UQCC2, UQCC4, UQCC5 and UQCC6; regulates MT-CYB synthesis and promotes its membrane insertion.

It localises to the mitochondrion inner membrane. Required for the assembly and stability of the mitochondrial ubiquinol-cytochrome c reductase complex (complex III (CIII) or cytochrome b-c1 complex), a multisubunit transmembrane complex that is part of the mitochondrial electron transport chain (ETC) which drives oxidative phosphorylation. Mediates early complex III biogenesis. Participates in regulating the levels of electron transport chain proteins, and therefore energy supply, in response to changes in energy demand. Also involved in the first steps of cytochrome c oxidase complex (complex IV) assembly. The polypeptide is Ubiquinol-cytochrome c reductase complex assembly factor 5 (Homo sapiens (Human)).